Here is a 581-residue protein sequence, read N- to C-terminus: MEVKEAGYVGEIYRISGPLVVAEGLKARMYDLCKVGEEGLMGEVVGLVGQKVLIQVYEDTEGVKPGDKVENTGMPLSVELGPGLIRNIYDGVQRPLPVLKEVSGDFIGRGIEAPGLDRKAKWEFKPLVKKGEKVKPGEIIGTVQETEVVEQKILVPPNVKEGVIAEIYEGSFTVEDTIAVLEDGTELKLYHKWPVRIPRPYVEKLPPVVPLITGQRILDTFFPVAKGGTAAIPGPFGSGKTVTQHQLAKWSDAQIVVYIGCGERGNEMTEVLEEFPELEDPRTGKPLMERTVLVANTSNMPVAAREASVYTGITIAEYFRDMGYDVAIQADSTSRWAEAMREISGRLEEMPGEEGYPAYLASRLAEFYERAGRVKTLAGNIGSVTVVGAVSPPGGDFSEPVTQNTLRIVKVFWALDAKLAARRHFPAINWLQSYSLYVDTLKDWFAENVSEEWNELRRWAMEVLQEEANLQEIVQLVGSDALPESQRVLLEVARIIREVYLIQYAYHPVDTYCSVQKQYDMLKAIKQINDWFYQALEAGKTIDEIAGVEGLEEFARAKFEEDYKPAMEAALEKIRKNLLGE.

Residue 234-241 (GPFGSGKT) coordinates ATP.

The protein belongs to the ATPase alpha/beta chains family. Has multiple subunits with at least A(3), B(3), C, D, E, F, H, I and proteolipid K(x).

It localises to the cell membrane. The enzyme catalyses ATP + H2O + 4 H(+)(in) = ADP + phosphate + 5 H(+)(out). Its function is as follows. Component of the A-type ATP synthase that produces ATP from ADP in the presence of a proton gradient across the membrane. The A chain is the catalytic subunit. The chain is A-type ATP synthase subunit A from Archaeoglobus fulgidus (strain ATCC 49558 / DSM 4304 / JCM 9628 / NBRC 100126 / VC-16).